The sequence spans 341 residues: Phenylalanine--tRNA ligase alpha subunit (341 aa).

A Mg(2+)-binding site is contributed by Glu256.

It belongs to the class-II aminoacyl-tRNA synthetase family. Phe-tRNA synthetase alpha subunit type 1 subfamily. As to quaternary structure, tetramer of two alpha and two beta subunits. Mg(2+) serves as cofactor.

The protein resides in the cytoplasm. It catalyses the reaction tRNA(Phe) + L-phenylalanine + ATP = L-phenylalanyl-tRNA(Phe) + AMP + diphosphate + H(+). The polypeptide is Phenylalanine--tRNA ligase alpha subunit (Leptospira borgpetersenii serovar Hardjo-bovis (strain JB197)).